Here is a 501-residue protein sequence, read N- to C-terminus: Glutamate--tRNA ligase (501 aa).

The 'HIGH' region signature appears at 11–21; it reads PSPTGALHIGG. The 'KMSKS' region signature appears at 260-264; sequence KLSKR. ATP is bound at residue Lys-263.

This sequence belongs to the class-I aminoacyl-tRNA synthetase family. Glutamate--tRNA ligase type 1 subfamily. Monomer.

The protein resides in the cytoplasm. It carries out the reaction tRNA(Glu) + L-glutamate + ATP = L-glutamyl-tRNA(Glu) + AMP + diphosphate. In terms of biological role, catalyzes the attachment of glutamate to tRNA(Glu) in a two-step reaction: glutamate is first activated by ATP to form Glu-AMP and then transferred to the acceptor end of tRNA(Glu). This Flavobacterium psychrophilum (strain ATCC 49511 / DSM 21280 / CIP 103535 / JIP02/86) protein is Glutamate--tRNA ligase.